The following is a 186-amino-acid chain: Nuclear transcription factor Y subunit B-1 (186 aa).

The segment at 1-24 is disordered; sequence MAGNKKRGGRNMDQVKKAAVRSDG. A DNA-binding region spans residues 34-40; the sequence is LPMANLV. Residues 61–72 form a subunit association domain (SAD) region; it reads THDCAVEFVGFV. A disordered region spans residues 123-142; it reads GGNRRVAPPPPAAATPLTPG.

This sequence belongs to the NFYB/HAP3 subunit family. Heterotrimeric transcription factor composed of three components, NF-YA, NF-YB and NF-YC. NF-YB and NF-YC must interact and dimerize for NF-YA association and DNA binding. Interacts with MADS18. Forms a ternary complex with the MADS6-MADS18 heterodimer. Expressed in developing kernels.

It is found in the nucleus. Functionally, component of the NF-Y/HAP transcription factor complex. The NF-Y complex stimulates the transcription of various genes by recognizing and binding to a CCAAT motif in promoters. May act through association with MADS-box proteins. May regulate the expression of genes involved in flowering. This is Nuclear transcription factor Y subunit B-1 (NFYB1) from Oryza sativa subsp. japonica (Rice).